A 171-amino-acid polypeptide reads, in one-letter code: Shikimate kinase (171 aa).

An ATP-binding site is contributed by G14–T19. S18 is a binding site for Mg(2+). Positions 36, 60, and 82 each coordinate substrate. R120 contacts ATP. R139 is a substrate binding site. Q156 is a binding site for ATP.

It belongs to the shikimate kinase family. Monomer. The cofactor is Mg(2+).

The protein resides in the cytoplasm. It carries out the reaction shikimate + ATP = 3-phosphoshikimate + ADP + H(+). The protein operates within metabolic intermediate biosynthesis; chorismate biosynthesis; chorismate from D-erythrose 4-phosphate and phosphoenolpyruvate: step 5/7. Its function is as follows. Catalyzes the specific phosphorylation of the 3-hydroxyl group of shikimic acid using ATP as a cosubstrate. In Shewanella pealeana (strain ATCC 700345 / ANG-SQ1), this protein is Shikimate kinase.